Consider the following 585-residue polypeptide: Parathyroid hormone/parathyroid hormone-related peptide receptor (585 aa).

Residues 1-26 form the signal peptide; sequence MGAARIAPGLALLLCCPVLSSAYALV. Over 27-184 the chain is Extracellular; sequence DADDVMTKEE…REREVFDRLG (158 aa). 3 cysteine pairs are disulfide-bonded: cysteine 48–cysteine 113, cysteine 104–cysteine 144, and cysteine 127–cysteine 166. Positions 66–100 are disordered; that stretch reads DKGWASAPTSGKPRKEKASGKLYPESGEDTGSRHQ. Asparagine 147, asparagine 157, asparagine 162, and asparagine 172 each carry an N-linked (GlcNAc...) asparagine glycan. A helical membrane pass occupies residues 185–208; sequence MIYTVGYSVSLASLTVAVLILAYF. At 209 to 215 the chain is on the cytoplasmic side; the sequence is RRLHCTR. Residues 216-235 form a helical membrane-spanning segment; sequence NYIHMHLFLSFMLRAVSIFV. At 236–277 the chain is on the extracellular side; that stretch reads KDAVLYSGATLDEAERLTEEELRAIAQAPLPPVAATSYVGCR. Residues 278–301 form a helical membrane-spanning segment; it reads VAVTFFLYFLATNYYWILVEGLYL. The Cytoplasmic segment spans residues 302-315; the sequence is HSLIFMAFFSEKKY. A helical membrane pass occupies residues 316–337; it reads LWGFTVFGWGLPAIFVAVWVSV. At 338-356 the chain is on the extracellular side; sequence RATLANTGCWDLSSGNKKW. The helical transmembrane segment at 357–377 threads the bilayer; that stretch reads IIQVPILASIVLNFILFINIV. At 378-404 the chain is on the cytoplasmic side; sequence RVLATKLRETNAGRCDTRQQYRKLLKS. Residues 405–423 traverse the membrane as a helical segment; sequence TLVLMPLFGVHYIVFMATP. The Extracellular portion of the chain corresponds to 424–435; the sequence is YTEVSGTLWQVQ. Residues 436 to 458 form a helical membrane-spanning segment; that stretch reads MHYEMLFNSFQGFFVAIIYCFCN. The Cytoplasmic portion of the chain corresponds to 459–585; that stretch reads GEVQAEIKKS…LLQEEWETVM (127 aa). Residues 469-472 carry the Important for interaction with G proteins motif; the sequence is WSRW. At threonine 543 the chain carries Phosphothreonine.

Belongs to the G-protein coupled receptor 2 family. In terms of assembly, homodimer in the absence of bound ligand. Peptide hormone binding leads to dissociation of the homodimer. In terms of processing, N-glycosylated.

The protein resides in the cell membrane. In terms of biological role, G-protein-coupled receptor for parathyroid hormone (PTH) and for parathyroid hormone-related peptide (PTHLH). Ligand binding causes a conformation change that triggers signaling via guanine nucleotide-binding proteins (G proteins) and modulates the activity of downstream effectors, such as adenylate cyclase (cAMP). PTH1R is coupled to G(s) G alpha proteins and mediates activation of adenylate cyclase activity. PTHLH dissociates from PTH1R more rapidly than PTH; as consequence, the cAMP response induced by PTHLH decays faster than the response induced by PTH. In Sus scrofa (Pig), this protein is Parathyroid hormone/parathyroid hormone-related peptide receptor (PTH1R).